The primary structure comprises 181 residues: TATA-box-binding protein (181 aa).

2 repeat units span residues 7–83 and 98–173.

This sequence belongs to the TBP family.

Its function is as follows. General factor that plays a role in the activation of archaeal genes transcribed by RNA polymerase. Binds specifically to the TATA box promoter element which lies close to the position of transcription initiation. In Methanococcus maripaludis (strain C6 / ATCC BAA-1332), this protein is TATA-box-binding protein.